Here is a 570-residue protein sequence, read N- to C-terminus: PTS system lactose-specific EIICB component (570 aa).

A PTS EIIC type-3 domain is found at 9–410; that stretch reads IEKGKPFFEK…VVDIIIYYPF (402 aa). 9 helical membrane-spanning segments follow: residues 31-51, 65-85, 104-124, 133-153, 178-198, 223-243, 283-303, 340-360, and 382-402; these read GFIS…IAYV, AILM…VAGT, INFI…ASDP, AFMG…TVIV, FKDL…DLVI, GWIG…VGIH, MFIV…MFMW, VFFI…KLFV, and IIMG…LIVV. The PTS EIIB type-3 domain maps to 467-570; sequence QTNVLVLCAG…LDFVQQQFEN (104 aa). Cysteine 474 (phosphocysteine intermediate; for EIIB activity) is an active-site residue. Residue cysteine 474 is modified to Phosphocysteine; by EIIA.

It localises to the cell membrane. The enzyme catalyses lactose(out) + N(pros)-phospho-L-histidyl-[protein] = lactose 6-phosphate(in) + L-histidyl-[protein]. Its function is as follows. The phosphoenolpyruvate-dependent sugar phosphotransferase system (sugar PTS), a major carbohydrate active transport system, catalyzes the phosphorylation of incoming sugar substrates concomitantly with their translocation across the cell membrane. The enzyme II LacEF PTS system is involved in lactose transport, but can also use galactose, isopropyl beta-thio-galactopyranoside and thiomethyl beta-D-galactopyranoside (TMG) as substrates. The protein is PTS system lactose-specific EIICB component of Staphylococcus aureus.